Here is a 141-residue protein sequence, read N- to C-terminus: Protein GAT3 (141 aa).

The GATA-type zinc-finger motif lies at 72–98 (CPQCAVIKTSPQWREGPDGEVTLCNAC).

In Saccharomyces cerevisiae (strain ATCC 204508 / S288c) (Baker's yeast), this protein is Protein GAT3 (GAT3).